Consider the following 66-residue polypeptide: Large ribosomal subunit protein bL33c (66 aa).

The protein belongs to the bacterial ribosomal protein bL33 family.

It localises to the plastid. It is found in the chloroplast. The sequence is that of Large ribosomal subunit protein bL33c from Solanum bulbocastanum (Wild potato).